A 358-amino-acid chain; its full sequence is Phospho-N-acetylmuramoyl-pentapeptide-transferase (358 aa).

The next 10 helical transmembrane spans lie at 27–47 (LFNNFIFIGVFILFFFLSLFA), 81–101 (MGGVFLMIPFFILLLIITINL), 106–126 (LFLLLLTIFGFYITGFLDDYL), 147–167 (VISIIFILLAYEKNLINPLVI), 171–191 (SWVINMNIFILPISFLVLVGI), 201–221 (LDGLAAGCSGIVFYGLGTEIL), 228–248 (LFVFSILCFSMSGLCLGFLKY), 255–275 (IFMGDTGSLSIGATLGTIALL), 278–298 (SVFTLSIFSGIFIIESLSVII), and 336–356 (IVENFWKINILLIILGIVLKI).

This sequence belongs to the glycosyltransferase 4 family. MraY subfamily. It depends on Mg(2+) as a cofactor.

The protein resides in the cell inner membrane. It carries out the reaction UDP-N-acetyl-alpha-D-muramoyl-L-alanyl-gamma-D-glutamyl-meso-2,6-diaminopimeloyl-D-alanyl-D-alanine + di-trans,octa-cis-undecaprenyl phosphate = di-trans,octa-cis-undecaprenyl diphospho-N-acetyl-alpha-D-muramoyl-L-alanyl-D-glutamyl-meso-2,6-diaminopimeloyl-D-alanyl-D-alanine + UMP. Its pathway is cell wall biogenesis; peptidoglycan biosynthesis. In terms of biological role, catalyzes the initial step of the lipid cycle reactions in the biosynthesis of the cell wall peptidoglycan: transfers peptidoglycan precursor phospho-MurNAc-pentapeptide from UDP-MurNAc-pentapeptide onto the lipid carrier undecaprenyl phosphate, yielding undecaprenyl-pyrophosphoryl-MurNAc-pentapeptide, known as lipid I. The polypeptide is Phospho-N-acetylmuramoyl-pentapeptide-transferase (Prochlorococcus marinus (strain MIT 9215)).